Here is a 339-residue protein sequence, read N- to C-terminus: Dihydroorotate dehydrogenase (quinone) (339 aa).

FMN-binding positions include 62 to 66 (AGLDK) and Thr86. Lys66 provides a ligand contact to substrate. 111–115 (NRMGF) contacts substrate. FMN-binding residues include Asn139 and Asn172. A substrate-binding site is contributed by Asn172. Ser175 acts as the Nucleophile in catalysis. Asn177 contributes to the substrate binding site. FMN is bound by residues Lys217 and Thr245. Position 246 to 247 (246 to 247 (NT)) interacts with substrate. FMN contacts are provided by residues Gly268, Gly297, and 318–319 (YS).

The protein belongs to the dihydroorotate dehydrogenase family. Type 2 subfamily. In terms of assembly, monomer. The cofactor is FMN.

The protein resides in the cell membrane. It carries out the reaction (S)-dihydroorotate + a quinone = orotate + a quinol. It participates in pyrimidine metabolism; UMP biosynthesis via de novo pathway; orotate from (S)-dihydroorotate (quinone route): step 1/1. Catalyzes the conversion of dihydroorotate to orotate with quinone as electron acceptor. This is Dihydroorotate dehydrogenase (quinone) from Shewanella amazonensis (strain ATCC BAA-1098 / SB2B).